Here is a 558-residue protein sequence, read N- to C-terminus: Proline--tRNA ligase (558 aa).

It belongs to the class-II aminoacyl-tRNA synthetase family. ProS type 1 subfamily. Homodimer.

The protein localises to the cytoplasm. The enzyme catalyses tRNA(Pro) + L-proline + ATP = L-prolyl-tRNA(Pro) + AMP + diphosphate. In terms of biological role, catalyzes the attachment of proline to tRNA(Pro) in a two-step reaction: proline is first activated by ATP to form Pro-AMP and then transferred to the acceptor end of tRNA(Pro). As ProRS can inadvertently accommodate and process non-cognate amino acids such as alanine and cysteine, to avoid such errors it has two additional distinct editing activities against alanine. One activity is designated as 'pretransfer' editing and involves the tRNA(Pro)-independent hydrolysis of activated Ala-AMP. The other activity is designated 'posttransfer' editing and involves deacylation of mischarged Ala-tRNA(Pro). The misacylated Cys-tRNA(Pro) is not edited by ProRS. The sequence is that of Proline--tRNA ligase from Coprothermobacter proteolyticus (strain ATCC 35245 / DSM 5265 / OCM 4 / BT).